The following is a 244-amino-acid chain: Putative outer membrane protein RC0105 (244 aa).

The N-terminal stretch at 1 to 23 is a signal peptide; that stretch reads MLRIVKKLGIILFVSTISINSFA.

This sequence belongs to the OmpW/AlkL family.

The protein resides in the cell outer membrane. This Rickettsia conorii (strain ATCC VR-613 / Malish 7) protein is Putative outer membrane protein RC0105.